Consider the following 250-residue polypeptide: 23S rRNA (guanosine-2'-O-)-methyltransferase RlmB (250 aa).

S-adenosyl-L-methionine contacts are provided by Gly-198, Leu-218, and Leu-227.

Belongs to the class IV-like SAM-binding methyltransferase superfamily. RNA methyltransferase TrmH family. RlmB subfamily.

It localises to the cytoplasm. The catalysed reaction is guanosine(2251) in 23S rRNA + S-adenosyl-L-methionine = 2'-O-methylguanosine(2251) in 23S rRNA + S-adenosyl-L-homocysteine + H(+). In terms of biological role, specifically methylates the ribose of guanosine 2251 in 23S rRNA. This is 23S rRNA (guanosine-2'-O-)-methyltransferase RlmB from Pseudomonas syringae pv. tomato (strain ATCC BAA-871 / DC3000).